Reading from the N-terminus, the 63-residue chain is Large ribosomal subunit protein uL29 (63 aa).

The protein belongs to the universal ribosomal protein uL29 family.

The sequence is that of Large ribosomal subunit protein uL29 from Histophilus somni (strain 129Pt) (Haemophilus somnus).